A 615-amino-acid polypeptide reads, in one-letter code: 1-deoxy-D-xylulose-5-phosphate synthase (615 aa).

Residues His72 and 111–113 each bind thiamine diphosphate; that span reads GHS. Asp142 contributes to the Mg(2+) binding site. Thiamine diphosphate-binding positions include 143–144, Asn171, Tyr278, and Glu360; that span reads GA. Residue Asn171 participates in Mg(2+) binding.

This sequence belongs to the transketolase family. DXPS subfamily. As to quaternary structure, homodimer. Mg(2+) serves as cofactor. It depends on thiamine diphosphate as a cofactor.

The catalysed reaction is D-glyceraldehyde 3-phosphate + pyruvate + H(+) = 1-deoxy-D-xylulose 5-phosphate + CO2. It participates in metabolic intermediate biosynthesis; 1-deoxy-D-xylulose 5-phosphate biosynthesis; 1-deoxy-D-xylulose 5-phosphate from D-glyceraldehyde 3-phosphate and pyruvate: step 1/1. Functionally, catalyzes the acyloin condensation reaction between C atoms 2 and 3 of pyruvate and glyceraldehyde 3-phosphate to yield 1-deoxy-D-xylulose-5-phosphate (DXP). In Campylobacter jejuni subsp. jejuni serotype O:2 (strain ATCC 700819 / NCTC 11168), this protein is 1-deoxy-D-xylulose-5-phosphate synthase.